The chain runs to 1002 residues: Solute carrier family 12 member 3 (1002 aa).

Residues 1–135 (MAELPVTELP…KSPGEPVRFG (135 aa)) are Cytoplasmic-facing. A Phosphoserine modification is found at serine 41. The residue at position 44 (threonine 44) is a Phosphothreonine. The residue at position 47 (serine 47) is a Phosphoserine. A phosphothreonine mark is found at threonine 48, threonine 53, and threonine 58. Residues serine 71 and serine 89 each carry the phosphoserine modification. Phosphothreonine is present on threonine 122. A Phosphoserine modification is found at serine 124. The discontinuously helical transmembrane segment at 136 to 165 (WVKGVMIRCMLNIWGVILYLRLPWITAQAG) threads the bilayer. Na(+)-binding residues include leucine 146 and tryptophan 149. Residues 166 to 187 (IVLTWLIILLSVMVTSITGLSI) traverse the membrane as a helical segment. Residues 188–218 (SAISTNGKVKSGGTYFLISRSLGPELGGSIG) are Cytoplasmic-facing. The helical transmembrane segment at 219 to 241 (LIFAFANAVGVAMHTVGFAETVR) threads the bilayer. At 242 to 253 (DLLQEYGTPIVD) the chain is on the extracellular side. Transmembrane regions (helical) follow at residues 254–278 (PINDIRIIGVVTVTVLLAISLAGME) and 279–301 (WESKAQVLFFLVIMVSFANYLVG). Over 302–336 (TLIPASEDKASKGFYSYHGDIFVQNLVPDWRGIDG) the chain is Extracellular. Residues 337 to 358 (SFFGMFSIFFPSATGILAGANI) form a discontinuously helical membrane-spanning segment. 3 residues coordinate chloride: glycine 351, isoleucine 352, and leucine 353. The Cytoplasmic portion of the chain corresponds to 359 to 369 (SGDLKDPAVAI). The chain crosses the membrane as a helical span at residues 370–391 (PKGTLMAIFWTTISYLAISATI). Residues 392 to 451 (GSCVVRDASGDVNDTMTPGPGPCEGLACGYGWNFTECSQQRSCRYGLINYYQTMSMVSAF) lie on the Extracellular side of the membrane. A glycan (N-linked (GlcNAc...) asparagine) is linked at asparagine 404. An intrachain disulfide couples cysteine 414 to cysteine 419. The N-linked (GlcNAc...) asparagine glycan is linked to asparagine 424. Residues cysteine 428 and cysteine 434 are joined by a disulfide bond. Residues 452 to 475 (APLITAGIFGATLSSALACLVSAA) form a helical membrane-spanning segment. Residues alanine 462, serine 465, and serine 466 each contribute to the Na(+) site. The Cytoplasmic segment spans residues 476-505 (KVFQCLCEDQLYPLIGFFGKGYGKNREPVR). The helical transmembrane segment at 506–520 (GYLLAYAIAVAFIII) threads the bilayer. Residues 521 to 525 (AELNT) lie on the Extracellular side of the membrane. A helical membrane pass occupies residues 526–542 (IAPIISNFFLCSYALIN). Tyrosine 538 is a chloride binding site. The Cytoplasmic segment spans residues 543–565 (FSCFHASITNSPGWRPSFRYYSK). 2 helical membrane-spanning segments follow: residues 566–585 (WAALFGAVISVVIMFLLTWW) and 586–597 (AALIAIGVVLFL). Over 598 to 1002 (LLYVIYKKPE…QENVLTFYCQ (405 aa)) the chain is Cytoplasmic. Residues 613–628 (SVQAGSYNLALSYSVG) form a scissor helix region. Residues leucine 646, arginine 653, valine 675, glycine 739, leucine 778, and asparagine 779 each coordinate ATP.

It belongs to the SLC12A transporter family. In terms of assembly, homodimer; adopts a domain-swap conformation at the scissor helices connecting the transmembrane domain and C-terminal domain. Interacts with KLHL3. Interacts with IL18R1; this interaction is increased by IL18 treatment. Ubiquitinated; ubiquitination is essential for regulation of endocytosis. In terms of processing, phosphorylated at Thr-53, Thr-58 and Ser-71 by OXSR1/OSR1 and STK39/SPAK downstream of WNK4, promoting its activity. Phosphorylated in response to IL18. In terms of tissue distribution, expressed predominantly in kidney, including in distal tubules (at protein level). Detected at low levels in heart, lung and liver. Not detected in normal aorta, but abundantly expressed in fatty streaks and advanced atherosclerotic lesions. In atherosclerotic lesions, expressed in macrophages, smooth muscle cells and endothelial cells (at protein level).

The protein resides in the cell membrane. It localises to the apical cell membrane. It catalyses the reaction chloride(out) + Na(+)(out) = chloride(in) + Na(+)(in). Its activity is regulated as follows. Phosphorylation by OXSR1/OSR1 and STK39/SPAK in kidney distal convoluted tubules promotes its activity. Also activated by OXSR1/OSR1 and STK39/SPAK downstream of WNK3. Inhibited by thiazide-type diuretic metolazone. Thiazide drugs, such as polythiazide, specifically inhibit SLC12A3/NCC transporter activity by competing with chloride for binding. Electroneutral sodium and chloride ion cotransporter, which acts as a key mediator of sodium and chloride reabsorption in kidney distal convoluted tubules. Also acts as a receptor for the pro-inflammatory cytokine IL18, thereby contributing to IL18-induced cytokine production, including IFNG, IL6, IL18 and CCL2. May act either independently of IL18R1, or in a complex with IL18R1. The polypeptide is Solute carrier family 12 member 3 (Mus musculus (Mouse)).